Reading from the N-terminus, the 608-residue chain is UvrABC system protein C (608 aa).

The region spanning 16–94 (NRPGVYRMFD…IKEWRPPYNI (79 aa)) is the GIY-YIG domain. The region spanning 204 to 239 (NALADELNTGMEQAAMRLDFEKAAELRDQVAILRRV) is the UVR domain.

This sequence belongs to the UvrC family. Interacts with UvrB in an incision complex.

Its subcellular location is the cytoplasm. In terms of biological role, the UvrABC repair system catalyzes the recognition and processing of DNA lesions. UvrC both incises the 5' and 3' sides of the lesion. The N-terminal half is responsible for the 3' incision and the C-terminal half is responsible for the 5' incision. The sequence is that of UvrABC system protein C from Pseudomonas paraeruginosa (strain DSM 24068 / PA7) (Pseudomonas aeruginosa (strain PA7)).